We begin with the raw amino-acid sequence, 426 residues long: Gamma-glutamyl phosphate reductase (426 aa).

This sequence belongs to the gamma-glutamyl phosphate reductase family.

The protein resides in the cytoplasm. It carries out the reaction L-glutamate 5-semialdehyde + phosphate + NADP(+) = L-glutamyl 5-phosphate + NADPH + H(+). The protein operates within amino-acid biosynthesis; L-proline biosynthesis; L-glutamate 5-semialdehyde from L-glutamate: step 2/2. Its function is as follows. Catalyzes the NADPH-dependent reduction of L-glutamate 5-phosphate into L-glutamate 5-semialdehyde and phosphate. The product spontaneously undergoes cyclization to form 1-pyrroline-5-carboxylate. The protein is Gamma-glutamyl phosphate reductase of Deinococcus geothermalis (strain DSM 11300 / CIP 105573 / AG-3a).